We begin with the raw amino-acid sequence, 394 residues long: Elongation factor Tu (394 aa).

The tr-type G domain occupies 10–204 (KPHVNIGTIG…AVDSYIPQPV (195 aa)). Residues 19 to 26 (GHVDHGKT) are G1. 19 to 26 (GHVDHGKT) is a GTP binding site. Mg(2+) is bound at residue Thr-26. A G2 region spans residues 60–64 (GITIS). Residues 81 to 84 (DCPG) are G3. GTP is bound by residues 81-85 (DCPGH) and 136-139 (NKVD). Residues 136–139 (NKVD) form a G4 region. The interval 174 to 176 (SAL) is G5.

This sequence belongs to the TRAFAC class translation factor GTPase superfamily. Classic translation factor GTPase family. EF-Tu/EF-1A subfamily. As to quaternary structure, monomer.

It is found in the cytoplasm. It carries out the reaction GTP + H2O = GDP + phosphate + H(+). GTP hydrolase that promotes the GTP-dependent binding of aminoacyl-tRNA to the A-site of ribosomes during protein biosynthesis. The protein is Elongation factor Tu of Rickettsia montanensis.